Reading from the N-terminus, the 61-residue chain is Beta-toxin Tce4 (61 aa).

Residues 1-61 (KEGYLMDHEG…KVWEYATNRC (61 aa)) form the LCN-type CS-alpha/beta domain. Disulfide bonds link Cys11–Cys61, Cys15–Cys37, Cys23–Cys42, and Cys27–Cys44. Cys61 carries the cysteine amide modification.

The protein belongs to the long (4 C-C) scorpion toxin superfamily. Sodium channel inhibitor family. Beta subfamily. As to expression, expressed by the venom gland.

Its subcellular location is the secreted. Its function is as follows. Beta toxins bind voltage-independently at site-4 of sodium channels (Nav) and shift the voltage of activation toward more negative potentials thereby affecting sodium channel activation and promoting spontaneous and repetitive firing. In Tityus cerroazul (Scorpion), this protein is Beta-toxin Tce4.